The primary structure comprises 295 residues: Ribosomal protein L11 methyltransferase (295 aa).

S-adenosyl-L-methionine-binding residues include Thr-138, Gly-161, Asp-183, and Asn-230.

This sequence belongs to the methyltransferase superfamily. PrmA family.

It localises to the cytoplasm. The catalysed reaction is L-lysyl-[protein] + 3 S-adenosyl-L-methionine = N(6),N(6),N(6)-trimethyl-L-lysyl-[protein] + 3 S-adenosyl-L-homocysteine + 3 H(+). Methylates ribosomal protein L11. The chain is Ribosomal protein L11 methyltransferase from Bradyrhizobium diazoefficiens (strain JCM 10833 / BCRC 13528 / IAM 13628 / NBRC 14792 / USDA 110).